A 918-amino-acid chain; its full sequence is NEDD4-like E3 ubiquitin-protein ligase WWP1 (918 aa).

The C2 domain maps to 1–116 (MATASPRSDT…THNRKLEKVK (116 aa)). Polar residues-rich tracts occupy residues 150–164 (TNRSSSPPIEIQQNG), 209–219 (NGENTPSSPSQ), and 235–258 (SAPTSDTVNGESSSVLADNTSTMG). Disordered stretches follow at residues 150–182 (TNRSSSPPIEIQQNGDALHENGDPATRTTPRLP) and 209–360 (NGEN…PHGR). The segment covering 266-281 (TTSTSNCTSTTTQEPP) has biased composition (low complexity). WW domains follow at residues 345 to 378 (EALPSGWEQRKDPHGRTYYVDHNTRTTTWERPQP), 377 to 410 (QPLPPGWERRVDDRGRVYYVDHNTRTTTWQRPTM), 452 to 485 (GPLPPGWEKRVDSTDRVYFVNHNTKTTQWEDPRT), and 492 to 525 (EPLPEGWEIRYTREGVRYFVDHNTRTTTFKDPRN). Positions 345-525 (EALPSGWEQR…RTTTFKDPRN (181 aa)) are interaction with ERBB4. The required for interaction with and ubiquitination of AMOTL2. Required for interaction with YAP1 stretch occupies residues 345–527 (EALPSGWEQR…TTFKDPRNGK (183 aa)). Positions 584–918 (KPYDLRRRLY…IEETEGFGQE (335 aa)) constitute an HECT domain. The active-site Glycyl thioester intermediate is Cys886.

Interacts with the Crumbs complex components PALS1 and PATJ; interaction with the Crumbs complex is enhanced by WWP1's interaction with AMOTL2 and facilitates WWP1 localization to the plasma membrane. Interaction with the Crumbs complex promotes WWP1 monoubiquitination of AMOTL2, which activates the Hippo signaling pathway. Binds SCNN1A, SCNN1B, SCNN1G, WBP1, WBP2, DRPLA and adenovirus type 2 PIII. Interacts with TGIF. Binds KLF2 AND HIVEP3. Interacts with RNF11. Interacts with SPART. Interacts with NDFIP1 and NDFIP2; this interaction activates the E3 ubiquitin-protein ligase. Interacts with ERBB4 isoforms JM-B CYT-1 and JM-A CYT-1. Does not interact with ERB4 isoform JMA-A CYT-2. Interacts with SMAD1, SMAD2, SMAD3, SMAD5, SMAD6, SMAD7, TGFBR1 and TGFBR2. Associates with the TGFBR1:TGFBR2 receptor complex in presence of SMAD7. Interacts with SKIL isoform 1. Interacts with TP63 isoform 1 and isoform 2. Interacts (via WW domains) with ARRDC1, ARRDC2 and ARRDC3. In terms of processing, auto-ubiquitinated and ubiquitinated by RNF11.

Its subcellular location is the cytoplasm. It localises to the cell membrane. The protein localises to the nucleus. The protein resides in the cell junction. It catalyses the reaction S-ubiquitinyl-[E2 ubiquitin-conjugating enzyme]-L-cysteine + [acceptor protein]-L-lysine = [E2 ubiquitin-conjugating enzyme]-L-cysteine + N(6)-ubiquitinyl-[acceptor protein]-L-lysine.. Its pathway is protein modification; protein ubiquitination. With respect to regulation, activated by NDFIP1- and NDFIP2-binding. In terms of biological role, E3 ubiquitin-protein ligase which accepts ubiquitin from an E2 ubiquitin-conjugating enzyme in the form of a thioester and then directly transfers the ubiquitin to targeted substrates. Ubiquitinates and promotes degradation of SMAD2 in response to TGF-beta signaling, which requires interaction with TGIF. Ubiquitinates ERBB4 isoforms JM-A CYT-1 and JM-B CYT-1, KLF2, KLF5 and TP63 and promotes their proteasomal degradation. Ubiquitinates RNF11 without targeting it for degradation. Ubiquitinates and promotes degradation of TGFBR1; the ubiquitination is enhanced by SMAD7. Ubiquitinates SMAD6 and SMAD7. Activates the Hippo signaling pathway in response to cell contact inhibition and recruitment to the Crumbs complex at the cell membrane. Monoubiquitinates AMOTL2 which facilitates its interaction with and activation of LATS2. LATS2 then phosphorylates YAP1, excluding it from the nucleus and therefore ultimately represses YAP1-driven transcription of target genes. The polypeptide is NEDD4-like E3 ubiquitin-protein ligase WWP1 (Wwp1) (Mus musculus (Mouse)).